The sequence spans 526 residues: Glucose-6-phosphate isomerase (526 aa).

E323 acts as the Proton donor in catalysis. Active-site residues include H352 and K454.

This sequence belongs to the GPI family.

The protein localises to the cytoplasm. The catalysed reaction is alpha-D-glucose 6-phosphate = beta-D-fructose 6-phosphate. It functions in the pathway carbohydrate biosynthesis; gluconeogenesis. The protein operates within carbohydrate degradation; glycolysis; D-glyceraldehyde 3-phosphate and glycerone phosphate from D-glucose: step 2/4. Functionally, catalyzes the reversible isomerization of glucose-6-phosphate to fructose-6-phosphate. The chain is Glucose-6-phosphate isomerase from Prochlorococcus marinus subsp. pastoris (strain CCMP1986 / NIES-2087 / MED4).